The sequence spans 97 residues: DNA-directed RNA polymerase subunit omega (97 aa).

This sequence belongs to the RNA polymerase subunit omega family. The RNAP catalytic core consists of 2 alpha, 1 beta, 1 beta' and 1 omega subunit. When a sigma factor is associated with the core the holoenzyme is formed, which can initiate transcription.

It carries out the reaction RNA(n) + a ribonucleoside 5'-triphosphate = RNA(n+1) + diphosphate. Promotes RNA polymerase assembly. Latches the N- and C-terminal regions of the beta' subunit thereby facilitating its interaction with the beta and alpha subunits. The chain is DNA-directed RNA polymerase subunit omega from Coxiella burnetii (strain CbuK_Q154) (Coxiella burnetii (strain Q154)).